The following is a 344-amino-acid chain: Phenylalanine--tRNA ligase alpha subunit (344 aa).

Glu-261 provides a ligand contact to Mg(2+).

This sequence belongs to the class-II aminoacyl-tRNA synthetase family. Phe-tRNA synthetase alpha subunit type 1 subfamily. In terms of assembly, tetramer of two alpha and two beta subunits. The cofactor is Mg(2+).

It localises to the cytoplasm. The enzyme catalyses tRNA(Phe) + L-phenylalanine + ATP = L-phenylalanyl-tRNA(Phe) + AMP + diphosphate + H(+). This is Phenylalanine--tRNA ligase alpha subunit from Ehrlichia ruminantium (strain Gardel).